We begin with the raw amino-acid sequence, 570 residues long: Putative ABC transporter ATP-binding protein MW2603 (570 aa).

ABC transporter domains lie at 6–247 (ISFK…GIRE) and 304–537 (LELN…ASLR). Residues 40-47 (GASGSGKS) and 338-345 (GHNGAGKS) each bind ATP.

Belongs to the ABC transporter superfamily.

It is found in the cell membrane. Its function is as follows. Probably part of an ABC transporter complex. Responsible for energy coupling to the transport system. This is Putative ABC transporter ATP-binding protein MW2603 from Staphylococcus aureus (strain MW2).